Reading from the N-terminus, the 307-residue chain is Aspartate carbamoyltransferase catalytic subunit (307 aa).

Positions 54 and 55 each coordinate carbamoyl phosphate. Position 83 (lysine 83) interacts with L-aspartate. Positions 104, 132, and 135 each coordinate carbamoyl phosphate. L-aspartate-binding residues include arginine 165 and arginine 228. Carbamoyl phosphate-binding residues include leucine 267 and proline 268.

This sequence belongs to the aspartate/ornithine carbamoyltransferase superfamily. ATCase family. Heterododecamer (2C3:3R2) of six catalytic PyrB chains organized as two trimers (C3), and six regulatory PyrI chains organized as three dimers (R2).

The enzyme catalyses carbamoyl phosphate + L-aspartate = N-carbamoyl-L-aspartate + phosphate + H(+). It participates in pyrimidine metabolism; UMP biosynthesis via de novo pathway; (S)-dihydroorotate from bicarbonate: step 2/3. In terms of biological role, catalyzes the condensation of carbamoyl phosphate and aspartate to form carbamoyl aspartate and inorganic phosphate, the committed step in the de novo pyrimidine nucleotide biosynthesis pathway. The polypeptide is Aspartate carbamoyltransferase catalytic subunit (Clostridium botulinum (strain Langeland / NCTC 10281 / Type F)).